The primary structure comprises 280 residues: Succinate dehydrogenase [ubiquinone] iron-sulfur subunit 2, mitochondrial (280 aa).

A mitochondrion-targeting transit peptide spans Met1–Trp28. Residues Phe51–Met140 form the 2Fe-2S ferredoxin-type domain. The [2Fe-2S] cluster site is built by Cys101, Cys106, and Cys121. A 4Fe-4S ferredoxin-type domain is found at Asp183 to Tyr213. [4Fe-4S] cluster is bound by residues Cys193, Cys196, and Cys199. [3Fe-4S] cluster is bound at residue Cys203. Trp208 provides a ligand contact to a ubiquinone. [3Fe-4S] cluster is bound by residues Cys250 and Cys256. Position 260 (Cys260) interacts with [4Fe-4S] cluster.

This sequence belongs to the succinate dehydrogenase/fumarate reductase iron-sulfur protein family. Component of complex II composed of eight subunits in plants: four classical SDH subunits SDH1, SDH2, SDH3 and SDH4 (a flavoprotein (FP), an iron-sulfur protein (IP), and a cytochrome b composed of a large and a small subunit.), as well as four subunits unknown in mitochondria from bacteria and heterotrophic eukaryotes. The cofactor is [2Fe-2S] cluster. [3Fe-4S] cluster serves as cofactor. It depends on [4Fe-4S] cluster as a cofactor. Ubiquitous. Preferentially expressed in flowers, inflorescences and root tips.

Its subcellular location is the mitochondrion inner membrane. The catalysed reaction is a quinone + succinate = fumarate + a quinol. Its pathway is carbohydrate metabolism; tricarboxylic acid cycle; fumarate from succinate (eukaryal route): step 1/1. Functionally, iron-sulfur protein (IP) subunit of succinate dehydrogenase (SDH) that is involved in complex II of the mitochondrial electron transport chain and is responsible for transferring electrons from succinate to ubiquinone (coenzyme Q). The protein is Succinate dehydrogenase [ubiquinone] iron-sulfur subunit 2, mitochondrial (SDH2-2) of Arabidopsis thaliana (Mouse-ear cress).